Reading from the N-terminus, the 210-residue chain is Outer-membrane lipoprotein LolB (210 aa).

A signal peptide spans Met1–Gly29. A lipid anchor (N-palmitoyl cysteine) is attached at Cys30. The S-diacylglycerol cysteine moiety is linked to residue Cys30.

It belongs to the LolB family. As to quaternary structure, monomer.

The protein localises to the cell outer membrane. Plays a critical role in the incorporation of lipoproteins in the outer membrane after they are released by the LolA protein. In Coxiella burnetii (strain RSA 493 / Nine Mile phase I), this protein is Outer-membrane lipoprotein LolB.